Here is a 501-residue protein sequence, read N- to C-terminus: Lysine--tRNA ligase (501 aa).

2 residues coordinate Mg(2+): E411 and E418.

It belongs to the class-II aminoacyl-tRNA synthetase family. Homodimer. Mg(2+) serves as cofactor.

The protein localises to the cytoplasm. It catalyses the reaction tRNA(Lys) + L-lysine + ATP = L-lysyl-tRNA(Lys) + AMP + diphosphate. The polypeptide is Lysine--tRNA ligase (Aliivibrio salmonicida (strain LFI1238) (Vibrio salmonicida (strain LFI1238))).